A 127-amino-acid polypeptide reads, in one-letter code: Mediator of RNA polymerase II transcription subunit 31 (127 aa).

This sequence belongs to the Mediator complex subunit 31 family. In terms of assembly, component of the Mediator complex.

It localises to the nucleus. Functionally, component of the Mediator complex, a coactivator involved in the regulated transcription of nearly all RNA polymerase II-dependent genes. Mediator functions as a bridge to convey information from gene-specific regulatory proteins to the basal RNA polymerase II transcription machinery. Mediator is recruited to promoters by direct interactions with regulatory proteins and serves as a scaffold for the assembly of a functional preinitiation complex with RNA polymerase II and the general transcription factors. The protein is Mediator of RNA polymerase II transcription subunit 31 (SOH1) of Eremothecium gossypii (strain ATCC 10895 / CBS 109.51 / FGSC 9923 / NRRL Y-1056) (Yeast).